The following is a 373-amino-acid chain: 5-amino-6-(5-phospho-D-ribitylamino)uracil phosphatase, chloroplastic (373 aa).

The protein belongs to the HAD-like hydrolase superfamily. DOG/GPP family. Homodimer. It depends on Mg(2+) as a cofactor.

It is found in the plastid. It localises to the chloroplast. The catalysed reaction is 5-amino-6-(5-phospho-D-ribitylamino)uracil + H2O = 5-amino-6-(D-ribitylamino)uracil + phosphate. Catalyzes the dephosphorylation of 5-amino-6-(5-phospho-D-ribitylamino)uracil, also known as ARPP, but has no activity toward flavin mononucleotide (FMN). This is 5-amino-6-(5-phospho-D-ribitylamino)uracil phosphatase, chloroplastic from Arabidopsis thaliana (Mouse-ear cress).